A 388-amino-acid polypeptide reads, in one-letter code: uncharacterized protein (388 aa).

Its subcellular location is the mitochondrion. This is an uncharacterized protein from Dictyostelium citrinum (Slime mold).